Reading from the N-terminus, the 110-residue chain is DNA-binding protein PAE3044 (110 aa).

This sequence belongs to the PDCD5 family.

This chain is DNA-binding protein PAE3044, found in Pyrobaculum aerophilum (strain ATCC 51768 / DSM 7523 / JCM 9630 / CIP 104966 / NBRC 100827 / IM2).